Reading from the N-terminus, the 79-residue chain is Large ribosomal subunit protein bL31 (79 aa).

This sequence belongs to the bacterial ribosomal protein bL31 family. Type A subfamily. As to quaternary structure, part of the 50S ribosomal subunit.

Its function is as follows. Binds the 23S rRNA. The chain is Large ribosomal subunit protein bL31 from Trichormus variabilis (strain ATCC 29413 / PCC 7937) (Anabaena variabilis).